The following is a 408-amino-acid chain: 3-ketoacyl-CoA thiolase A, peroxisomal (408 aa).

The active-site Acyl-thioester intermediate is Cys112. Residues His366 and Cys394 each act as proton acceptor in the active site.

Belongs to the thiolase-like superfamily. Thiolase family. Homodimer.

The protein resides in the peroxisome. It catalyses the reaction an acyl-CoA + acetyl-CoA = a 3-oxoacyl-CoA + CoA. It functions in the pathway lipid metabolism; fatty acid metabolism. The sequence is that of 3-ketoacyl-CoA thiolase A, peroxisomal from Candida tropicalis (Yeast).